The primary structure comprises 457 residues: Siroheme synthase (457 aa).

Positions 1-204 (MDHLPIFCQL…NDQKAITETT (204 aa)) are precorrin-2 dehydrogenase /sirohydrochlorin ferrochelatase. NAD(+) is bound by residues 22 to 23 (DV) and 43 to 44 (LA). Serine 128 is subject to Phosphoserine. The uroporphyrinogen-III C-methyltransferase stretch occupies residues 216–457 (GEVVLVGAGP…RDKLNWFSNH (242 aa)). An S-adenosyl-L-methionine-binding site is contributed by proline 225. Catalysis depends on aspartate 248, which acts as the Proton acceptor. The Proton donor role is filled by lysine 270. Residues 301 to 303 (GGD), isoleucine 306, 331 to 332 (TA), methionine 382, and glycine 411 contribute to the S-adenosyl-L-methionine site.

This sequence in the N-terminal section; belongs to the precorrin-2 dehydrogenase / sirohydrochlorin ferrochelatase family. In the C-terminal section; belongs to the precorrin methyltransferase family.

It catalyses the reaction uroporphyrinogen III + 2 S-adenosyl-L-methionine = precorrin-2 + 2 S-adenosyl-L-homocysteine + H(+). It carries out the reaction precorrin-2 + NAD(+) = sirohydrochlorin + NADH + 2 H(+). The catalysed reaction is siroheme + 2 H(+) = sirohydrochlorin + Fe(2+). Its pathway is cofactor biosynthesis; adenosylcobalamin biosynthesis; precorrin-2 from uroporphyrinogen III: step 1/1. It participates in cofactor biosynthesis; adenosylcobalamin biosynthesis; sirohydrochlorin from precorrin-2: step 1/1. The protein operates within porphyrin-containing compound metabolism; siroheme biosynthesis; precorrin-2 from uroporphyrinogen III: step 1/1. It functions in the pathway porphyrin-containing compound metabolism; siroheme biosynthesis; siroheme from sirohydrochlorin: step 1/1. Its pathway is porphyrin-containing compound metabolism; siroheme biosynthesis; sirohydrochlorin from precorrin-2: step 1/1. In terms of biological role, multifunctional enzyme that catalyzes the SAM-dependent methylations of uroporphyrinogen III at position C-2 and C-7 to form precorrin-2 via precorrin-1. Then it catalyzes the NAD-dependent ring dehydrogenation of precorrin-2 to yield sirohydrochlorin. Finally, it catalyzes the ferrochelation of sirohydrochlorin to yield siroheme. In Escherichia coli O81 (strain ED1a), this protein is Siroheme synthase.